The sequence spans 447 residues: Multicopper oxidase mco (447 aa).

The span at 1 to 25 shows a compositional bias: basic and acidic residues; sequence MMNMKEDKKNTMDMKNMKHHDERKK. Residues 1–28 are disordered; it reads MMNMKEDKKNTMDMKNMKHHDERKKLNS. Cu cation is bound by residues H107, H109, H147, H149, H375, H378, H380, H428, C429, H430, H434, and M439.

The protein belongs to the multicopper oxidase family. Requires Cu cation as cofactor.

It is found in the cytoplasm. In terms of biological role, may be involved in copper homeostasis and oxidative stress response. The chain is Multicopper oxidase mco (mco) from Staphylococcus epidermidis (strain ATCC 12228 / FDA PCI 1200).